A 199-amino-acid polypeptide reads, in one-letter code: Auxin-responsive protein IAA1 (199 aa).

Positions 25–29 (LTLRL) match the EAR-like (transcriptional repression) motif. The segment at 31-74 (GSLAAAAAPDPDRKRSSPSSSDAADAADNSSPLAAAADAPPAPK) is disordered. Residues 47-69 (SPSSSDAADAADNSSPLAAAADA) are compositionally biased toward low complexity. The PB1 domain occupies 93-187 (AKFVKVAVDG…TCQRLRLMKS (95 aa)).

The protein belongs to the Aux/IAA family. Homodimers and heterodimers. Highly expressed in flowers. Expressed at low levels in roots and shoots.

It is found in the nucleus. Aux/IAA proteins are short-lived transcriptional factors that function as repressors of early auxin response genes at low auxin concentrations. The sequence is that of Auxin-responsive protein IAA1 (IAA1) from Oryza sativa subsp. japonica (Rice).